The primary structure comprises 170 residues: ATP synthase subunit b (170 aa).

A helical membrane pass occupies residues 3–23 (IKILFFLALPFLAYASEHGGT).

The protein belongs to the ATPase B chain family. F-type ATPases have 2 components, F(1) - the catalytic core - and F(0) - the membrane proton channel. F(1) has five subunits: alpha(3), beta(3), gamma(1), delta(1), epsilon(1). F(0) has three main subunits: a(1), b(2) and c(10-14). The alpha and beta chains form an alternating ring which encloses part of the gamma chain. F(1) is attached to F(0) by a central stalk formed by the gamma and epsilon chains, while a peripheral stalk is formed by the delta and b chains.

The protein resides in the cell inner membrane. In terms of biological role, f(1)F(0) ATP synthase produces ATP from ADP in the presence of a proton or sodium gradient. F-type ATPases consist of two structural domains, F(1) containing the extramembraneous catalytic core and F(0) containing the membrane proton channel, linked together by a central stalk and a peripheral stalk. During catalysis, ATP synthesis in the catalytic domain of F(1) is coupled via a rotary mechanism of the central stalk subunits to proton translocation. Component of the F(0) channel, it forms part of the peripheral stalk, linking F(1) to F(0). The sequence is that of ATP synthase subunit b from Campylobacter concisus (strain 13826).